The chain runs to 250 residues: 5-oxoprolinase subunit A (250 aa).

The protein belongs to the LamB/PxpA family. In terms of assembly, forms a complex composed of PxpA, PxpB and PxpC.

The enzyme catalyses 5-oxo-L-proline + ATP + 2 H2O = L-glutamate + ADP + phosphate + H(+). Catalyzes the cleavage of 5-oxoproline to form L-glutamate coupled to the hydrolysis of ATP to ADP and inorganic phosphate. The polypeptide is 5-oxoprolinase subunit A (Paraburkholderia xenovorans (strain LB400)).